The chain runs to 628 residues: Crossover junction endonuclease MUS81 (628 aa).

A compositionally biased stretch (polar residues) spans 298–310 (SHTFGNGDSNNSI). The tract at residues 298 to 318 (SHTFGNGDSNNSIEPLPRDTS) is disordered. In terms of domain architecture, ERCC4 spans 348–445 (YPVIDHREVR…HKYYLIEETI (98 aa)).

This sequence belongs to the XPF family. As to quaternary structure, interacts with EME1. Requires Mg(2+) as cofactor.

It is found in the nucleus. Its function is as follows. Interacts with EME1 to form a DNA structure-specific endonuclease with substrate preference for branched DNA structures with a 5'-end at the branch nick. Typical substrates include 3'-flap structures, D-loops, replication forks and nicked Holliday junctions. May be required in mitosis for the processing of stalled or collapsed replication fork intermediates. May be required in meiosis for the repair of meiosis-specific double strand breaks subsequent to single-end invasion (SEI). The protein is Crossover junction endonuclease MUS81 (MUS81) of Candida glabrata (strain ATCC 2001 / BCRC 20586 / JCM 3761 / NBRC 0622 / NRRL Y-65 / CBS 138) (Yeast).